The primary structure comprises 74 residues: MFDIKAWAEYVVEWAAKDPYGFLTTVILALTPLFLASAVLSWKLAKMIEAREKEQKKKQKRQENIAKAKRLKKD.

A helical membrane pass occupies residues 20-40 (YGFLTTVILALTPLFLASAVL). Residues 42 to 74 (WKLAKMIEAREKEQKKKQKRQENIAKAKRLKKD) adopt a coiled-coil conformation. Positions 55–66 (QKKKQKRQENIA) are enriched in basic and acidic residues. The disordered stretch occupies residues 55–74 (QKKKQKRQENIAKAKRLKKD).

This sequence belongs to the SMIM15 family.

Its subcellular location is the membrane. The protein is Small integral membrane protein 15 (SMIM15) of Homo sapiens (Human).